The chain runs to 304 residues: Acetylglutamate kinase (304 aa).

Substrate contacts are provided by residues 71 to 72, arginine 93, and asparagine 193; that span reads GG.

Belongs to the acetylglutamate kinase family. ArgB subfamily.

It is found in the cytoplasm. The catalysed reaction is N-acetyl-L-glutamate + ATP = N-acetyl-L-glutamyl 5-phosphate + ADP. Its pathway is amino-acid biosynthesis; L-arginine biosynthesis; N(2)-acetyl-L-ornithine from L-glutamate: step 2/4. Functionally, catalyzes the ATP-dependent phosphorylation of N-acetyl-L-glutamate. The polypeptide is Acetylglutamate kinase (Streptomyces avermitilis (strain ATCC 31267 / DSM 46492 / JCM 5070 / NBRC 14893 / NCIMB 12804 / NRRL 8165 / MA-4680)).